We begin with the raw amino-acid sequence, 67 residues long: Large ribosomal subunit protein uL29 (67 aa).

This sequence belongs to the universal ribosomal protein uL29 family.

The sequence is that of Large ribosomal subunit protein uL29 from Desulforudis audaxviator (strain MP104C).